We begin with the raw amino-acid sequence, 485 residues long: Glutamyl-tRNA(Gln) amidotransferase subunit A (485 aa).

Active-site charge relay system residues include lysine 78 and serine 153. Serine 177 (acyl-ester intermediate) is an active-site residue.

The protein belongs to the amidase family. GatA subfamily. As to quaternary structure, heterotrimer of A, B and C subunits.

It catalyses the reaction L-glutamyl-tRNA(Gln) + L-glutamine + ATP + H2O = L-glutaminyl-tRNA(Gln) + L-glutamate + ADP + phosphate + H(+). Allows the formation of correctly charged Gln-tRNA(Gln) through the transamidation of misacylated Glu-tRNA(Gln) in organisms which lack glutaminyl-tRNA synthetase. The reaction takes place in the presence of glutamine and ATP through an activated gamma-phospho-Glu-tRNA(Gln). The polypeptide is Glutamyl-tRNA(Gln) amidotransferase subunit A (Geobacter metallireducens (strain ATCC 53774 / DSM 7210 / GS-15)).